Reading from the N-terminus, the 292-residue chain is 33 kDa chaperonin (292 aa).

2 cysteine pairs are disulfide-bonded: cysteine 230/cysteine 232 and cysteine 263/cysteine 266.

Belongs to the HSP33 family. In terms of processing, under oxidizing conditions two disulfide bonds are formed involving the reactive cysteines. Under reducing conditions zinc is bound to the reactive cysteines and the protein is inactive.

It localises to the cytoplasm. Redox regulated molecular chaperone. Protects both thermally unfolding and oxidatively damaged proteins from irreversible aggregation. Plays an important role in the bacterial defense system toward oxidative stress. This is 33 kDa chaperonin from Sodalis glossinidius (strain morsitans).